We begin with the raw amino-acid sequence, 195 residues long: Nicotinamide riboside kinase 1 (195 aa).

10-18 (GVTNGGKTT) is a binding site for ATP. The Mg(2+) site is built by Thr-17 and Asp-36. Asp-36 (proton acceptor) is an active-site residue. Substrate is bound by residues 36-39 (DDFF) and 55-56 (YD). Arg-128 lines the ATP pocket. Residues Arg-129 and 134-135 (YE) each bind substrate. Residues 132–134 (RVY) and 172–174 (RSE) each bind ATP.

It belongs to the uridine kinase family. NRK subfamily. Monomer.

It catalyses the reaction beta-nicotinamide D-riboside + ATP = beta-nicotinamide D-ribonucleotide + ADP + H(+). It carries out the reaction beta-D-ribosylnicotinate + ATP = nicotinate beta-D-ribonucleotide + ADP + H(+). It participates in cofactor biosynthesis; NAD(+) biosynthesis. Catalyzes the phosphorylation of nicotinamide riboside (NR) and nicotinic acid riboside (NaR) to form nicotinamide mononucleotide (NMN) and nicotinic acid mononucleotide (NaMN). In Rattus norvegicus (Rat), this protein is Nicotinamide riboside kinase 1 (Nmrk1).